The sequence spans 556 residues: Glutamine--tRNA ligase (556 aa).

Positions 34 to 44 (PEPNGYLHIGH) match the 'HIGH' region motif. Residues 35–37 (EPN) and 41–47 (HIGHAKS) contribute to the ATP site. L-glutamine-binding residues include Asp-67 and Tyr-212. ATP contacts are provided by residues Thr-231, 261–262 (RL), and 269–271 (MSK). The short motif at 268-272 (VMSKR) is the 'KMSKS' region element.

It belongs to the class-I aminoacyl-tRNA synthetase family. Monomer.

It is found in the cytoplasm. It catalyses the reaction tRNA(Gln) + L-glutamine + ATP = L-glutaminyl-tRNA(Gln) + AMP + diphosphate. This chain is Glutamine--tRNA ligase, found in Vibrio campbellii (strain ATCC BAA-1116).